A 134-amino-acid chain; its full sequence is Profilin-2 (134 aa).

C13 and C118 form a disulfide bridge. The short motif at 84–100 (AVIRGKKGSGGITIKKT) is the Involved in PIP2 interaction element. At T114 the chain carries Phosphothreonine.

Belongs to the profilin family. In terms of assembly, occurs in many kinds of cells as a complex with monomeric actin in a 1:1 ratio. Post-translationally, phosphorylated by MAP kinases.

Its subcellular location is the cytoplasm. It is found in the cytoskeleton. Binds to actin and affects the structure of the cytoskeleton. At high concentrations, profilin prevents the polymerization of actin, whereas it enhances it at low concentrations. By binding to PIP2, it inhibits the formation of IP3 and DG. The chain is Profilin-2 (PRO2) from Olea europaea (Common olive).